The primary structure comprises 262 residues: Indole-3-glycerol phosphate synthase (262 aa).

It belongs to the TrpC family.

The catalysed reaction is 1-(2-carboxyphenylamino)-1-deoxy-D-ribulose 5-phosphate + H(+) = (1S,2R)-1-C-(indol-3-yl)glycerol 3-phosphate + CO2 + H2O. It participates in amino-acid biosynthesis; L-tryptophan biosynthesis; L-tryptophan from chorismate: step 4/5. This chain is Indole-3-glycerol phosphate synthase, found in Staphylococcus epidermidis (strain ATCC 35984 / DSM 28319 / BCRC 17069 / CCUG 31568 / BM 3577 / RP62A).